Reading from the N-terminus, the 374-residue chain is Dihydroorotate dehydrogenase (quinone) (374 aa).

FMN-binding positions include alanine 78–lysine 82 and threonine 102. Position 82 (lysine 82) interacts with substrate. Position 127 to 131 (asparagine 127 to phenylalanine 131) interacts with substrate. Residues asparagine 159 and asparagine 192 each contribute to the FMN site. Asparagine 192 lines the substrate pocket. The active-site Nucleophile is serine 195. Asparagine 197 contacts substrate. Lysine 230 and threonine 258 together coordinate FMN. A substrate-binding site is contributed by asparagine 259–threonine 260. Residues glycine 287, glycine 316, and tyrosine 337–threonine 338 each bind FMN.

This sequence belongs to the dihydroorotate dehydrogenase family. Type 2 subfamily. Monomer. It depends on FMN as a cofactor.

The protein localises to the cell membrane. The catalysed reaction is (S)-dihydroorotate + a quinone = orotate + a quinol. It participates in pyrimidine metabolism; UMP biosynthesis via de novo pathway; orotate from (S)-dihydroorotate (quinone route): step 1/1. Catalyzes the conversion of dihydroorotate to orotate with quinone as electron acceptor. The chain is Dihydroorotate dehydrogenase (quinone) from Acaryochloris marina (strain MBIC 11017).